Reading from the N-terminus, the 383-residue chain is Microtubule-associated protein tau (383 aa).

The segment covering 1–27 (MAEPRQEFDVMEDHAGTYGLGDRKDQE) has biased composition (basic and acidic residues). The tract at residues 1-198 (MAEPRQEFDV…PVPMPDLKNV (198 aa)) is disordered. N-acetylalanine is present on Ala2. 2 positions are modified to phosphotyrosine: Tyr18 and Tyr29. Lys44 participates in a covalent cross-link: Glycyl lysine isopeptide (Lys-Gly) (interchain with G-Cter in ubiquitin). A Phosphothreonine modification is found at Thr53. Residues 72–91 (KSKDGTGSDDKKAKGADGKT) show a composition bias toward basic and acidic residues. Phosphothreonine is present on Thr95. The residue at position 97 (Arg97) is an Omega-N-methylarginine. Lys105 carries the post-translational modification N6,N6-dimethyllysine; alternate. Lys105 carries the post-translational modification N6-acetyllysine; alternate. Phosphothreonine is present on residues Thr111, Thr117, and Thr123. Over residues 116–128 (KTPPAPKTPPSSG) the composition is skewed to pro residues. Phosphoserine is present on residues Ser127, Ser133, and Ser137. The span at 129–156 (EPPKSGDRSGYSSPGSPGTPGSRSRTPS) shows a compositional bias: low complexity. Residue Tyr139 is modified to Phosphotyrosine. Phosphoserine occurs at positions 140, 141, and 144. A phosphothreonine mark is found at Thr147 and Thr154. Ser156 carries the phosphoserine modification. Thr159 carries the post-translational modification Phosphothreonine. Lys167 carries the post-translational modification N6-acetyllysine. Phosphothreonine is present on Thr173. Phosphoserine is present on residues Ser177 and Ser179. 4 Tau/MAP repeats span residues 186-216 (QTAP…GGGK), 217-247 (VQII…GGGS), 248-278 (VQIV…GGGQ), and 279-310 (VEVK…GGGN). A Glycyl lysine isopeptide (Lys-Gly) (interchain with G-Cter in ubiquitin) cross-link involves residue Lys196. N6-acetyllysine; alternate is present on Lys201. N6-methyllysine; alternate is present on Lys201. Lys201 is covalently cross-linked (Glycyl lysine isopeptide (Lys-Gly) (interchain with G-Cter in ubiquitin); alternate). Position 204 is a phosphoserine (Ser204). A Glycyl lysine isopeptide (Lys-Gly) (interchain with G-Cter in ubiquitin) cross-link involves residue Lys209. Lys223 carries the post-translational modification N6-acetyllysine; alternate. A Glycyl lysine isopeptide (Lys-Gly) (interchain with G-Cter in ubiquitin); alternate cross-link involves residue Lys223. Residues Ser227 and Ser231 each carry the phosphoserine modification. The residue at position 232 (Lys232) is an N6-acetyllysine. A disulfide bridge connects residues Cys233 and Cys264. Phosphoserine is present on Ser235. Lys240 carries the post-translational modification N6-acetyllysine; alternate. Residue Lys240 forms a Glycyl lysine isopeptide (Lys-Gly) (interchain with G-Cter in ubiquitin); alternate linkage. Ser247 bears the Phosphoserine mark. Lys253 carries the post-translational modification N6,N6-dimethyllysine; alternate. An N6-acetyllysine; alternate mark is found at Lys253, Lys259, and Lys263. Residues Lys253, Lys259, and Lys263 each participate in a glycyl lysine isopeptide (Lys-Gly) (interchain with G-Cter in ubiquitin); alternate cross-link. A Phosphoserine modification is found at Ser266. N6-acetyllysine; alternate is present on residues Lys273, Lys285, and Lys289. Residues Lys273, Lys285, and Lys289 each participate in a glycyl lysine isopeptide (Lys-Gly) (interchain with G-Cter in ubiquitin); alternate cross-link. Residue Arg291 is modified to Omega-N-methylarginine. The residue at position 294 (Ser294) is a Phosphoserine. Lys295 participates in a covalent cross-link: Glycyl lysine isopeptide (Lys-Gly) (interchain with G-Cter in ubiquitin). Residue Ser298 is modified to Phosphoserine. Lys311 is modified (N6-acetyllysine; alternate). Lys311 is covalently cross-linked (Glycyl lysine isopeptide (Lys-Gly) (interchain with G-Cter in ubiquitin); alternate). A Glycyl lysine isopeptide (Lys-Gly) (interchain with G-Cter in ubiquitin) cross-link involves residue Lys317. Lys327 carries the post-translational modification N6-acetyllysine; alternate. Residue Lys327 forms a Glycyl lysine isopeptide (Lys-Gly) (interchain with G-Cter in ubiquitin); alternate linkage. The residue at position 336 (Tyr336) is a Phosphotyrosine. Phosphoserine occurs at positions 338 and 342. The segment at 340–359 (VVSGDTSPRHLSNVSSTGSI) is disordered. Positions 343–358 (GDTSPRHLSNVSSTGS) are enriched in polar residues. Thr345 bears the Phosphothreonine mark. Ser346, Ser351, Ser358, and Ser364 each carry phosphoserine. Thr369 carries the post-translational modification Phosphothreonine.

In terms of assembly, interacts with MARK1, MARK2, MARK3 and MARK4. Interacts with SQSTM1 when polyubiquitinated. Interacts with PSMC2 through SQSTM1. Interacts with FKBP4. Binds to CSNK1D. Interacts with SGK1. Interacts with PIN1. Interacts with LRRK2. Interacts with LRP1, leading to endocytosis; this interaction is reduced in the presence of LRPAP1/RAP. Polyubiquitinated. Requires functional TRAF6 and may provoke SQSTM1-dependent degradation by the proteasome. In terms of processing, phosphorylation at various serine and threonine residues in S-P or T-P motifs by proline-directed protein kinases (PDPK1, CDK1, CDK5, GSK3, MAPK) (a few sites per protein in interphase, more in mitosis), and at serine residues in K-X-G-S motifs by MAP/microtubule affinity-regulating kinase (MARK1, MARK2, MARK3 or MARK4), causing detachment from microtubules, and their disassembly. Phosphorylation at Ser-204 by BRSK1 and BRSK2 in neurons affects ability to bind microtubules and plays a role in neuron polarization. Phosphorylated by PHK. Dephosphorylation at several serine and threonine residues by the serine/threonine phosphatase PPP5C. In terms of tissue distribution, expressed in neurons.

It is found in the cytoplasm. The protein localises to the cytosol. It localises to the cell membrane. The protein resides in the cytoskeleton. Its subcellular location is the cell projection. It is found in the axon. The protein localises to the dendrite. In terms of biological role, promotes microtubule assembly and stability, and might be involved in the establishment and maintenance of neuronal polarity. The C-terminus binds axonal microtubules while the N-terminus binds neural plasma membrane components, suggesting that tau functions as a linker protein between both. Axonal polarity is predetermined by tau localization (in the neuronal cell) in the domain of the cell body defined by the centrosome. The polypeptide is Microtubule-associated protein tau (MAPT) (Papio hamadryas (Hamadryas baboon)).